The sequence spans 282 residues: Undecaprenyl-diphosphatase (282 aa).

The next 7 helical transmembrane spans lie at 40-60, 85-105, 117-137, 158-178, 193-213, 231-251, and 258-278; these read GAAFTAIVQIGTLIAVLIYFF, AKMGWMIAAGTIPIVVFGLLF, YWISAALITLAIILSLAEWLI, ALIIGLVQSIALIPGSSRSGV, AARFSFLLSLPAVFAAGIYQL, IVATLVAGIVGYASIAFLITF, and AVFIIYRIALGLTILALIATG.

It belongs to the UppP family.

It localises to the cell inner membrane. The catalysed reaction is di-trans,octa-cis-undecaprenyl diphosphate + H2O = di-trans,octa-cis-undecaprenyl phosphate + phosphate + H(+). Functionally, catalyzes the dephosphorylation of undecaprenyl diphosphate (UPP). Confers resistance to bacitracin. The protein is Undecaprenyl-diphosphatase of Prosthecochloris aestuarii (strain DSM 271 / SK 413).